A 272-amino-acid polypeptide reads, in one-letter code: EID1-like F-box protein 3 (272 aa).

One can recognise an F-box domain in the interval 29-81; sequence SGKSGIENERVLVLVFESISWDIHTLCTIASLSRRFCAIARRILWRRLCVNRA.

The protein is EID1-like F-box protein 3 (EDL3) of Arabidopsis thaliana (Mouse-ear cress).